The following is a 419-amino-acid chain: CDP-diacylglycerol--serine O-phosphatidyltransferase 3 (419 aa).

Positions 1–51 (MPVRRRWYPPSSTAAQPSPDGGDVNTDDADACPSSRQQRPPSLPQHSAPIH) are disordered. Residues 33-47 (PSSRQQRPPSLPQHS) are compositionally biased toward low complexity. A run of 7 helical transmembrane segments spans residues 103-123 (PHTV…SGVL), 142-162 (WAMI…TILI), 168-188 (VWRL…FLLF), 260-280 (LLLW…RHML), 287-307 (WWDS…WAGM), 359-379 (FIQV…TFFL), and 384-404 (WIPP…LIAI).

This sequence belongs to the CDP-alcohol phosphatidyltransferase class-I family.

It localises to the endoplasmic reticulum membrane. The enzyme catalyses a CDP-1,2-diacyl-sn-glycerol + L-serine = a 1,2-diacyl-sn-glycero-3-phospho-L-serine + CMP + H(+). It participates in phospholipid metabolism; phosphatidylethanolamine biosynthesis; phosphatidylethanolamine from CDP-diacylglycerol: step 1/2. Functionally, catalyzes a base-exchange reaction in which the polar head group of phosphatidylethanolamine (PE) or phosphatidylcholine (PC) is replaced by L-serine. The protein is CDP-diacylglycerol--serine O-phosphatidyltransferase 3 (PSS3) of Oryza sativa subsp. japonica (Rice).